Reading from the N-terminus, the 46-residue chain is Diuretic hormone (46 aa).

I46 is subject to Isoleucine amide.

The protein belongs to the sauvagine/corticotropin-releasing factor/urotensin I family.

It localises to the secreted. Functionally, regulation of fluid secretion. Stimulates primary urine secretion by Malpighian tubules and causes a dose-dependent stimulation of cAMP levels in the tubules. In Periplaneta americana (American cockroach), this protein is Diuretic hormone.